A 75-amino-acid chain; its full sequence is Caerin-1.1 (75 aa).

The signal sequence occupies residues 1 to 22 (MASLKKSLFLVLLLGFVSVSIC). The propeptide occupies 23-49 (EEEKRQEDEDEHEEEGESQEEGSEEKR). The tract at residues 24 to 49 (EEKRQEDEDEHEEEGESQEEGSEEKR) is disordered. Residues 30 to 45 (DEDEHEEEGESQEEGS) show a composition bias toward acidic residues. Position 74 is a leucine amide (L74).

Belongs to the frog skin active peptide (FSAP) family. Caerin subfamily. Post-translationally, the major product is Caerin-1.1; in addition, different peptides are produced that are missing some amino acid residues at the N-terminus or C-terminus. Caerin-1.1.1 and Caerin-1.1.4 are inactive. As to expression, expressed by the skin parotoid and/or rostral glands.

It is found in the secreted. Functionally, antimicrobial peptide with antibacterial and antiviral activities. Adopts an alpha helical conformation which can disrupt bacterial membranes. Inhibits the formation of NO by neuronal nitric oxide synthase (nNOS) at micromolar concentrations. Acts by a non-competitive mechanism, probably by binding to calcium/calmodulin and as a consequence blocking calmodulin attachment to nNOS. Is inactive. The polypeptide is Caerin-1.1 (Ranoidea caerulea (Green tree frog)).